Reading from the N-terminus, the 555-residue chain is Spermine oxidase (555 aa).

FAD-binding positions include Ala35, Glu55, Arg63, 79 to 80, and Val261; that span reads TW. The disordered stretch occupies residues 271–306; that stretch reads ARPRGPEIEPRGEGDHNHDTGEGGQGGEEPRGGRWD. Positions 274–291 are enriched in basic and acidic residues; it reads RGPEIEPRGEGDHNHDTG. Residues Glu519 and 528–529 each bind FAD; that span reads TT.

This sequence belongs to the flavin monoamine oxidase family. Requires FAD as cofactor. In terms of tissue distribution, widely expressed. Expressed in human tumor cell lines. Isoform 4 is only found in an embryonal kidney cell line.

It is found in the cytoplasm. Its subcellular location is the nucleus. The catalysed reaction is spermine + O2 + H2O = 3-aminopropanal + spermidine + H2O2. The protein operates within amine and polyamine degradation; spermine degradation. Inhibited at more than 90% by SL-11144, SL-11150 and SL-11158, at concentrations less than 1 uM. In terms of biological role, flavoenzyme which catalyzes the oxidation of spermine to spermidine. Can also use N(1)-acetylspermine and spermidine as substrates, with different affinity depending on the isoform (isozyme) and on the experimental conditions. Plays an important role in the regulation of polyamine intracellular concentration and has the potential to act as a determinant of cellular sensitivity to the antitumor polyamine analogs. May contribute to beta-alanine production via aldehyde dehydrogenase conversion of 3-amino-propanal. The chain is Spermine oxidase (SMOX) from Homo sapiens (Human).